Here is a 280-residue protein sequence, read N- to C-terminus: HCLS1-associated protein X-1 (280 aa).

S2 bears the N-acetylserine mark. Positions 2 to 45 are required for localization in mitochondria; sequence SVFDLFRGFFGFPGPRSHRDPFFGGMTRDDDDDDDDDDEAEEDR. 2 disordered regions span residues 12–70 and 100–263; these read GFPG…SFSP and TLPS…SALD. The segment covering 30-43 has biased composition (acidic residues); sequence DDDDDDDDDDEAEE. Positions 115-280 are involved in HCLS1 binding; sequence TPGERLREGQ…LLLGRWFRSR (166 aa). 2 stretches are compositionally biased toward basic and acidic residues: residues 116–125 and 134–154; these read PGERLREGQT and PDSHQPRIFEGVLESHAKPES. Residues 176–207 form an involved in CASP9 binding region; sequence VSPHSRAKEDKDLDSQVSQEGLGPLLQPQPKS. The tract at residues 177–248 is involved in GNA13 binding; it reads SPHSRAKEDK…TTVTHQEAHD (72 aa). Residues 184–280 are required for localization in sarcoplasmic reticulum; that stretch reads EDKDLDSQVS…LLLGRWFRSR (97 aa). Residues 185–280 form an involved in PKD2 binding region; that stretch reads DKDLDSQVSQ…LLLGRWFRSR (96 aa). A phosphoserine mark is found at S190 and S193. The tract at residues 204–226 is involved in PLN binding; the sequence is QPKSYFKSISVTKITKPDGTVEE. Residues 204–246 form an involved in ATP2A2 binding region; the sequence is QPKSYFKSISVTKITKPDGTVEERRTVVDSEGRRETTVTHQEA. Residues 211 to 280 are mediates interaction with UCP3; sequence SISVTKITKP…LLLGRWFRSR (70 aa). A compositionally biased stretch (basic and acidic residues) spans 218–256; that stretch reads TKPDGTVEERRTVVDSEGRRETTVTHQEAHDSSRSDPDS. The segment at 271-280 is required for ITGB6 binding; sequence LLLGRWFRSR.

It belongs to the HAX1 family. As to quaternary structure, interacts with ABCB1, ABCB4 and ABCB11. Directly associates with HCLS1/HS1, through binding to its N-terminal region. Interacts with CTTN. Interacts with PKD2. Interacts with GNA13. Interacts with CASP9. Interacts with ITGB6. Interacts with PLN and ATP2A2; these interactions are inhibited by calcium. Interacts with GRB7. Interacts (via C-terminus) with XIAP/BIRC4 (via BIR 2 domain and BIR 3 domain) and this interaction blocks ubiquitination of XIAP/BIRC4. Interacts with TPC2. Interacts with KCNC3. Interacts with XPO1. Interacts with RNF217. Interacts with UCP3; the interaction is direct and calcium-dependent. Interacts with MAPRE2; this interaction regulates cell migration in keratinocytes. In terms of tissue distribution, ubiquitous, with highest levels in kidney and liver (at protein level).

It is found in the mitochondrion matrix. The protein localises to the endoplasmic reticulum. The protein resides in the nucleus membrane. Its subcellular location is the cytoplasmic vesicle. It localises to the cytoplasm. It is found in the cell cortex. The protein localises to the cell membrane. The protein resides in the sarcoplasmic reticulum. Its subcellular location is the P-body. It localises to the nucleus. Recruits the Arp2/3 complex to the cell cortex and regulates reorganization of the cortical actin cytoskeleton via its interaction with KCNC3 and the Arp2/3 complex. Slows down the rate of inactivation of KCNC3 channels. Promotes GNA13-mediated cell migration. Involved in the clathrin-mediated endocytosis pathway. May be involved in internalization of ABC transporters such as ABCB11. May inhibit CASP9 and CASP3. Promotes cell survival. May regulate intracellular calcium pools. The chain is HCLS1-associated protein X-1 (Hax1) from Mus musculus (Mouse).